The chain runs to 497 residues: Guanosine-5'-triphosphate,3'-diphosphate pyrophosphatase (497 aa).

Belongs to the GppA/Ppx family. GppA subfamily.

It carries out the reaction guanosine 3'-diphosphate 5'-triphosphate + H2O = guanosine 3',5'-bis(diphosphate) + phosphate + H(+). It functions in the pathway purine metabolism; ppGpp biosynthesis; ppGpp from GTP: step 2/2. Functionally, catalyzes the conversion of pppGpp to ppGpp. Guanosine pentaphosphate (pppGpp) is a cytoplasmic signaling molecule which together with ppGpp controls the 'stringent response', an adaptive process that allows bacteria to respond to amino acid starvation, resulting in the coordinated regulation of numerous cellular activities. The polypeptide is Guanosine-5'-triphosphate,3'-diphosphate pyrophosphatase (Vibrio vulnificus (strain YJ016)).